The chain runs to 129 residues: Small ribosomal subunit protein uS11 (129 aa).

The segment at 108 to 129 is disordered; the sequence is EDVTPIPHDGTKPKGGKRGRRV.

This sequence belongs to the universal ribosomal protein uS11 family. In terms of assembly, part of the 30S ribosomal subunit.

Located on the platform of the 30S subunit. This is Small ribosomal subunit protein uS11 from Methanothrix thermoacetophila (strain DSM 6194 / JCM 14653 / NBRC 101360 / PT) (Methanosaeta thermophila).